Reading from the N-terminus, the 698-residue chain is Polyribonucleotide nucleotidyltransferase (698 aa).

Mg(2+)-binding residues include Asp-490 and Asp-496. A KH domain is found at 557–616 (PKVVTMTIKPDKIRDVIGPGGKKINEIIDETGVKLDIEQDGTIFIGAVDQAMINRAREII). Positions 626–694 (GQTYQATVKR…KQGRVNASHR (69 aa)) constitute an S1 motif domain.

The protein belongs to the polyribonucleotide nucleotidyltransferase family. The cofactor is Mg(2+).

It localises to the cytoplasm. The catalysed reaction is RNA(n+1) + phosphate = RNA(n) + a ribonucleoside 5'-diphosphate. Its function is as follows. Involved in mRNA degradation. Catalyzes the phosphorolysis of single-stranded polyribonucleotides processively in the 3'- to 5'-direction. The sequence is that of Polyribonucleotide nucleotidyltransferase from Staphylococcus aureus (strain bovine RF122 / ET3-1).